The chain runs to 522 residues: Glycogen synthase (522 aa).

The segment at 1-29 (MISAVLDTQGDHPQQQAGDRAAPSVPVPG) is disordered. Lys58 serves as a coordination point for ADP-alpha-D-glucose.

The protein belongs to the glycosyltransferase 1 family. Bacterial/plant glycogen synthase subfamily.

It carries out the reaction [(1-&gt;4)-alpha-D-glucosyl](n) + ADP-alpha-D-glucose = [(1-&gt;4)-alpha-D-glucosyl](n+1) + ADP + H(+). It participates in glycan biosynthesis; glycogen biosynthesis. Functionally, synthesizes alpha-1,4-glucan chains using ADP-glucose. The sequence is that of Glycogen synthase from Pseudomonas fluorescens (strain ATCC BAA-477 / NRRL B-23932 / Pf-5).